The chain runs to 1299 residues: MLDVTTFDELRIGLATADDIRRWSHGEVKKPETINYRTLKPEKDGLFGEQIFGPSRDWECSCGKYKRVRFKGIVCERCGVEVTKSAVRRERMGHIELAAPVTHIWYFKGVPSRLGYLLDMAPKDLEKVIYFAAYMVISVDEDARHEDMPGLENELRLEIKTLQDQRDSQIAERLGRLETDLAALEAEGAKSDQKRRAKDGAEKEMGQTRKAFDEDISRLERVWEEFRSLKVGELKPEDAVFHELQDRFGIYFEAHMGAEAIQKRLEAFDLEAEGELLREQIATGKGQKKIRAIKRLRVVSSFLATGNSPAAMVLQVVPVIPPELRPMVQLDGGRFATSDLNDLYRRVINRNNRLRRLLDLGAPEIIVNNEKRMLQEAVDALFDNGRRGRPVTGTGNRALKSLSDMLKGKQGRFRQNLLGKRVDYSGRSVIIVGPQLKLHQCGLPKQMALELFKPFVIKRLIDLSHAQNIKAAKRMVERSRGQVWDVLEEIIRERPVLLNRAPTLHRLGIQAFEPQLVEGKAIQLHPLVCAAFNADFDGDQMAVHLPLSVEAQAEARILMLASNNILKPSDGRPVTLPTQDMIIGLHHLTTLKEGVAGEGRAFSSVAEAILAKDQLSLDLNAKVRIRLHDIYFGEGEAPEGVELDEKGKTVGPVLLETTLGRALFNETLPVDYPYIEAVADKGKLSEIVNDLAERYPKVEVAAALDRIKDAGFYWATRSGVTVALSDVLTPPTKAAILSGYEKQAAKVQGQFEKGLTTNAERRQELIEIWNKATAEVAKAMEDNLPADNNINRMVSSGARGNWMQVRQIAGMRGLVSNPKGEIIPRPIVHSYREGLTVAEYFISTHGARKGLADTALRTADSGYLTRRLVDVSQDVIIREDDCGTSRGLDLPIATKGADGSSVRDSNVENSVYARSLAADAVNEAGEVVAPAGSDVGDVMIDHLIAAGVHEIKVRSVLTCESAVGVCAACYGRSLATGKLVDIGEVVGIIAAQSIGEPGTQLTMRTFHTGGVASADDITQGLPRVQELFEARTPKGASPIAEAAGRITIEDTDRSRKVILTPDNGDEPHIYPVLKRATLLVEDGQHVELGQQLHVGAIDPKEVLRVKGVREVQKHLVGGVQGVYRSQGVPIHDKHIEVIVRQMLRKVTVVEHGDTDLLPGELVDRARYNEVNRATLTEGKKTASARQEVMGITKASLATESWLSAASFQETTRVLTQAAMEGKSDPLMGLKENVIIGKLIPAGTGLAKYRDVTVTATEEAKAERYPNRIFTDESVFNESDLSFVDFDSFSSDDYTPGTYN.

Residues Cys60, Cys62, Cys75, and Cys78 each contribute to the Zn(2+) site. The interval 188 to 209 (GAKSDQKRRAKDGAEKEMGQTR) is disordered. Positions 535, 537, and 539 each coordinate Mg(2+). Residues Cys882, Cys959, Cys966, and Cys969 each contribute to the Zn(2+) site.

It belongs to the RNA polymerase beta' chain family. The RNAP catalytic core consists of 2 alpha, 1 beta, 1 beta' and 1 omega subunit. When a sigma factor is associated with the core the holoenzyme is formed, which can initiate transcription. It depends on Mg(2+) as a cofactor. Requires Zn(2+) as cofactor.

It carries out the reaction RNA(n) + a ribonucleoside 5'-triphosphate = RNA(n+1) + diphosphate. Its function is as follows. DNA-dependent RNA polymerase catalyzes the transcription of DNA into RNA using the four ribonucleoside triphosphates as substrates. The protein is DNA-directed RNA polymerase subunit beta' of Clavibacter sepedonicus (Clavibacter michiganensis subsp. sepedonicus).